A 317-amino-acid chain; its full sequence is Small ribosomal subunit protein uS2 (317 aa).

Position 2 is an N-acetylserine (serine 2). 2 laminin-binding regions span residues 161–180 (IPCN…MLAR) and 205–229 (RDPE…EFQG). 5 [DE]-W-[ST] repeats span residues 230–232 (EWS), 245–247 (DWS), 288–290 (DWS), 297–299 (DWS), and 315–317 (EWS). The interval 242 to 317 (EVPDWSEGVQ…DWGGSTAEWS (76 aa)) is laminin-binding. Residues 278-317 (PGPTTEGYSEDWSAQPATEDWSAAPTAQAGDWGGSTAEWS) form a disordered region.

It belongs to the universal ribosomal protein uS2 family. As to quaternary structure, monomer (37LRP) and homodimer (67LR). Component of the small ribosomal subunit. Mature ribosomes consist of a small (40S) and a large (60S) subunit. The 40S subunit contains about 33 different proteins and 1 molecule of RNA (18S). The 60S subunit contains about 49 different proteins and 3 molecules of RNA (28S, 5.8S and 5S). Interacts with rps21. Interacts with several laminins including at least lamb1. Interacts with mdk. Post-translationally, acylated. Acylation may be a prerequisite for conversion of the monomeric 37 kDa laminin receptor precursor (37LRP) to the mature dimeric 67 kDa laminin receptor (67LR), and may provide a mechanism for membrane association. Cleaved by stromelysin-3 (ST3) at the cell surface. Cleavage by stromelysin-3 may be a mechanism to alter cell-extracellular matrix interactions.

The protein resides in the cell membrane. Its subcellular location is the cytoplasm. It is found in the nucleus. Functionally, required for the assembly and/or stability of the 40S ribosomal subunit. Required for the processing of the 20S rRNA-precursor to mature 18S rRNA in a late step of the maturation of 40S ribosomal subunits. Also functions as a cell surface receptor for laminin. Plays a role in cell adhesion to the basement membrane and in the consequent activation of signaling transduction pathways. May play a role in cell fate determination and tissue morphogenesis. This chain is Small ribosomal subunit protein uS2 (rpsa), found in Ictalurus punctatus (Channel catfish).